Here is a 521-residue protein sequence, read N- to C-terminus: MFS siderochrome iron transporter 1 (521 aa).

Positions 1–10 (MDKTASLTSQ) are enriched in polar residues. Positions 1–29 (MDKTASLTSQDAEKHDPDALRKERATDPP) are disordered. A compositionally biased stretch (basic and acidic residues) spans 11 to 29 (DAEKHDPDALRKERATDPP). 5 consecutive transmembrane segments (helical) span residues 62-82 (WGLF…PLMG), 99-119 (FLSL…AFGC), 126-146 (WSFN…GGTQ), 148-168 (FVAL…NMPV), and 187-207 (ILSI…WPLI). N-linked (GlcNAc...) asparagine glycosylation occurs at Asn209. The next 6 helical transmembrane spans lie at 229 to 249 (YLLF…FFVF), 330 to 350 (LAWS…ASTL), 379 to 399 (VIIA…VEQP), 404 to 424 (KGTL…TTTA), 431 to 451 (LGWN…LYAI), and 466 to 486 (GLTA…ALYA). An N-linked (GlcNAc...) asparagine glycan is attached at Asn487. The chain crosses the membrane as a helical span at residues 491 to 511 (AVPVYVSGALIIASGAMALLL).

It belongs to the major facilitator superfamily.

The protein resides in the membrane. Its function is as follows. Major facilitator transporter probably involved in siderophore basidioferrin transmembrane transport. The polypeptide is MFS siderochrome iron transporter 1 (Ceriporiopsis subvermispora (strain B) (White-rot fungus)).